We begin with the raw amino-acid sequence, 238 residues long: UPF0758 protein Dtpsy_2777 (238 aa).

Positions 116-238 (VFDSPQAVQH…ALSMAEQGLV (123 aa)) constitute an MPN domain. Residues histidine 187, histidine 189, and aspartate 200 each coordinate Zn(2+). The JAMM motif motif lies at 187-200 (HNHPSGSVQPSRAD).

This sequence belongs to the UPF0758 family.

The polypeptide is UPF0758 protein Dtpsy_2777 (Acidovorax ebreus (strain TPSY) (Diaphorobacter sp. (strain TPSY))).